Reading from the N-terminus, the 79-residue chain is RNA-binding protein Hfq (79 aa).

The Sm domain maps to 10-69; sequence DPFLNALRKEHVPVSIYLVNGIKLQGNIESFDQYVVLLRNTVTQMVYKHAISTVVPARAV.

The protein belongs to the Hfq family. In terms of assembly, homohexamer.

Functionally, RNA chaperone that binds small regulatory RNA (sRNAs) and mRNAs to facilitate mRNA translational regulation in response to envelope stress, environmental stress and changes in metabolite concentrations. Also binds with high specificity to tRNAs. The polypeptide is RNA-binding protein Hfq (Ralstonia nicotianae (strain ATCC BAA-1114 / GMI1000) (Ralstonia solanacearum)).